Consider the following 240-residue polypeptide: 4-hydroxy-tetrahydrodipicolinate reductase (240 aa).

NAD(+) contacts are provided by residues 79–81 (ATT) and 103–106 (SANM). His-135 serves as the catalytic Proton donor/acceptor. His-136 lines the (S)-2,3,4,5-tetrahydrodipicolinate pocket. The active-site Proton donor is the Lys-139. 145–146 (GT) provides a ligand contact to (S)-2,3,4,5-tetrahydrodipicolinate.

The protein belongs to the DapB family.

The protein resides in the cytoplasm. The enzyme catalyses (S)-2,3,4,5-tetrahydrodipicolinate + NAD(+) + H2O = (2S,4S)-4-hydroxy-2,3,4,5-tetrahydrodipicolinate + NADH + H(+). It catalyses the reaction (S)-2,3,4,5-tetrahydrodipicolinate + NADP(+) + H2O = (2S,4S)-4-hydroxy-2,3,4,5-tetrahydrodipicolinate + NADPH + H(+). It functions in the pathway amino-acid biosynthesis; L-lysine biosynthesis via DAP pathway; (S)-tetrahydrodipicolinate from L-aspartate: step 4/4. Functionally, catalyzes the conversion of 4-hydroxy-tetrahydrodipicolinate (HTPA) to tetrahydrodipicolinate. In Staphylococcus epidermidis (strain ATCC 12228 / FDA PCI 1200), this protein is 4-hydroxy-tetrahydrodipicolinate reductase.